Reading from the N-terminus, the 225-residue chain is NAD(P)H-quinone oxidoreductase subunit K, chloroplastic (225 aa).

Residues Cys43, Cys44, Cys108, and Cys139 each coordinate [4Fe-4S] cluster.

Belongs to the complex I 20 kDa subunit family. In terms of assembly, NDH is composed of at least 16 different subunits, 5 of which are encoded in the nucleus. [4Fe-4S] cluster is required as a cofactor.

It localises to the plastid. The protein resides in the chloroplast thylakoid membrane. The catalysed reaction is a plastoquinone + NADH + (n+1) H(+)(in) = a plastoquinol + NAD(+) + n H(+)(out). It carries out the reaction a plastoquinone + NADPH + (n+1) H(+)(in) = a plastoquinol + NADP(+) + n H(+)(out). NDH shuttles electrons from NAD(P)H:plastoquinone, via FMN and iron-sulfur (Fe-S) centers, to quinones in the photosynthetic chain and possibly in a chloroplast respiratory chain. The immediate electron acceptor for the enzyme in this species is believed to be plastoquinone. Couples the redox reaction to proton translocation, and thus conserves the redox energy in a proton gradient. This is NAD(P)H-quinone oxidoreductase subunit K, chloroplastic from Capsella bursa-pastoris (Shepherd's purse).